Consider the following 406-residue polypeptide: Argininosuccinate synthase (406 aa).

An ATP-binding site is contributed by Ala-9–Ser-17. Tyr-86 lines the L-citrulline pocket. Position 116 (Gly-116) interacts with ATP. L-aspartate is bound by residues Thr-118, Asn-122, and Asp-123. Position 122 (Asn-122) interacts with L-citrulline. L-citrulline contacts are provided by Arg-126, Ser-174, Ser-183, Glu-259, and Tyr-271.

Belongs to the argininosuccinate synthase family. Type 1 subfamily. In terms of assembly, homotetramer.

The protein localises to the cytoplasm. It catalyses the reaction L-citrulline + L-aspartate + ATP = 2-(N(omega)-L-arginino)succinate + AMP + diphosphate + H(+). It functions in the pathway amino-acid biosynthesis; L-arginine biosynthesis; L-arginine from L-ornithine and carbamoyl phosphate: step 2/3. This is Argininosuccinate synthase from Geobacillus kaustophilus (strain HTA426).